A 172-amino-acid chain; its full sequence is Large ribosomal subunit protein bL17 (172 aa).

The disordered stretch occupies residues 127–172 (KAAKQDRAKRVKGSKKVTGDVAPAVAPVPSAPAETQEEAKAPESAE). Over residues 147-159 (VAPAVAPVPSAPA) the composition is skewed to low complexity. Over residues 163–172 (EEAKAPESAE) the composition is skewed to basic and acidic residues.

Belongs to the bacterial ribosomal protein bL17 family. Part of the 50S ribosomal subunit. Contacts protein L32.

The chain is Large ribosomal subunit protein bL17 from Chlorobium luteolum (strain DSM 273 / BCRC 81028 / 2530) (Pelodictyon luteolum).